The sequence spans 150 residues: Large ribosomal subunit protein uL11 (150 aa).

The protein belongs to the universal ribosomal protein uL11 family. Part of the ribosomal stalk of the 50S ribosomal subunit. Interacts with L10 and the large rRNA to form the base of the stalk. L10 forms an elongated spine to which L12 dimers bind in a sequential fashion forming a multimeric L10(L12)X complex. In terms of processing, one or more lysine residues are methylated.

Forms part of the ribosomal stalk which helps the ribosome interact with GTP-bound translation factors. The protein is Large ribosomal subunit protein uL11 of Azobacteroides pseudotrichonymphae genomovar. CFP2.